Here is a 441-residue protein sequence, read N- to C-terminus: Xaa-Pro dipeptidase (441 aa).

Residues Asp-244, Asp-255, His-336, Glu-381, and Glu-420 each contribute to the Mn(2+) site.

It belongs to the peptidase M24B family. Bacterial-type prolidase subfamily. It depends on Mn(2+) as a cofactor.

The catalysed reaction is Xaa-L-Pro dipeptide + H2O = an L-alpha-amino acid + L-proline. Splits dipeptides with a prolyl residue in the C-terminal position. This Xanthomonas oryzae pv. oryzae (strain MAFF 311018) protein is Xaa-Pro dipeptidase.